Here is a 473-residue protein sequence, read N- to C-terminus: Photosystem II CP43 reaction center protein (473 aa).

The propeptide occupies 1 to 14; it reads MKTLYSLRRFYPVE. The residue at position 15 (T15) is an N-acetylthreonine. The residue at position 15 (T15) is a Phosphothreonine. Transmembrane regions (helical) follow at residues 69 to 93, 134 to 155, 178 to 200, 255 to 275, and 291 to 312; these read LFEVAHFVPEKPMYEQGLILLPHLA, LLGPETLEESFPFFGYVWKDRN, KALYFGGVYDTWAPGGGDVRKIT, KPFAWARRAFVWSGEAYLSYS, and WFNNTAYPSEFYGPTGPEASQA. E367 contributes to the [CaMn4O5] cluster binding site. The chain crosses the membrane as a helical span at residues 447–471; it reads RARAAAAGFEKGIDRDLEPVLSMTP.

The protein belongs to the PsbB/PsbC family. PsbC subfamily. In terms of assembly, PSII is composed of 1 copy each of membrane proteins PsbA, PsbB, PsbC, PsbD, PsbE, PsbF, PsbH, PsbI, PsbJ, PsbK, PsbL, PsbM, PsbT, PsbX, PsbY, PsbZ, Psb30/Ycf12, at least 3 peripheral proteins of the oxygen-evolving complex and a large number of cofactors. It forms dimeric complexes. Binds multiple chlorophylls and provides some of the ligands for the Ca-4Mn-5O cluster of the oxygen-evolving complex. It may also provide a ligand for a Cl- that is required for oxygen evolution. PSII binds additional chlorophylls, carotenoids and specific lipids. serves as cofactor.

It localises to the plastid. It is found in the chloroplast thylakoid membrane. Functionally, one of the components of the core complex of photosystem II (PSII). It binds chlorophyll and helps catalyze the primary light-induced photochemical processes of PSII. PSII is a light-driven water:plastoquinone oxidoreductase, using light energy to abstract electrons from H(2)O, generating O(2) and a proton gradient subsequently used for ATP formation. The sequence is that of Photosystem II CP43 reaction center protein from Dioscorea elephantipes (Elephant's foot yam).